A 237-amino-acid polypeptide reads, in one-letter code: GCN5-related N-acetyltransferase 3, chloroplastic (237 aa).

The transit peptide at 1–93 (MGLVGCVGKS…RAISRSDVIV (93 aa)) directs the protein to the chloroplast. Positions 94 to 237 (SVFCKPQHVD…TMMFTKSLEA (144 aa)) constitute an N-acetyltransferase domain. Residues 171 to 173 (LMV), 179 to 184 (RMGIGK), 207 to 209 (FED), and Phe214 each bind acetyl-CoA.

The protein belongs to the acetyltransferase family. GNAT subfamily. Oligomer. Post-translationally, autoacetylated. In terms of tissue distribution, expressed in green tissues.

The protein localises to the plastid. The protein resides in the chloroplast. The enzyme catalyses an N-terminal L-alpha-aminoacyl-[protein] + acetyl-CoA = N-terminal N(alpha)-acetyl-L-alpha-aminoacyl-[protein] + CoA + H(+). It catalyses the reaction L-lysyl-[protein] + acetyl-CoA = N(6)-acetyl-L-lysyl-[protein] + CoA + H(+). Functionally, protein acetyltransferase with dual specificity triggering both N-alpha-acetylation (NTA) and epsilon-lysine acetylation (KA), possibly with a low efficiency or toward specific plastid substrates. The protein is GCN5-related N-acetyltransferase 3, chloroplastic of Arabidopsis thaliana (Mouse-ear cress).